The primary structure comprises 226 residues: ATP synthase F(0) complex subunit a (226 aa).

6 helical membrane-spanning segments follow: residues 6–26, 68–88, 97–117, 138–158, 164–184, and 189–209; these read FASF…IIMF, WALM…LGLL, QLSM…ILGF, IPML…ALAV, ITAG…LMDI, and ATIT…VALI.

Belongs to the ATPase A chain family. Component of the ATP synthase complex composed at least of ATP5F1A/subunit alpha, ATP5F1B/subunit beta, ATP5MC1/subunit c (homooctomer), MT-ATP6/subunit a, MT-ATP8/subunit 8, ATP5ME/subunit e, ATP5MF/subunit f, ATP5MG/subunit g, ATP5MK/subunit k, ATP5MJ/subunit j, ATP5F1C/subunit gamma, ATP5F1D/subunit delta, ATP5F1E/subunit epsilon, ATP5PF/subunit F6, ATP5PB/subunit b, ATP5PD/subunit d, ATP5PO/subunit OSCP. ATP synthase complex consists of a soluble F(1) head domain (subunits alpha(3) and beta(3)) - the catalytic core - and a membrane F(0) domain - the membrane proton channel (subunits c, a, 8, e, f, g, k and j). These two domains are linked by a central stalk (subunits gamma, delta, and epsilon) rotating inside the F1 region and a stationary peripheral stalk (subunits F6, b, d, and OSCP). Interacts with DNAJC30; interaction is direct.

The protein localises to the mitochondrion inner membrane. It catalyses the reaction H(+)(in) = H(+)(out). Functionally, subunit a, of the mitochondrial membrane ATP synthase complex (F(1)F(0) ATP synthase or Complex V) that produces ATP from ADP in the presence of a proton gradient across the membrane which is generated by electron transport complexes of the respiratory chain. ATP synthase complex consist of a soluble F(1) head domain - the catalytic core - and a membrane F(1) domain - the membrane proton channel. These two domains are linked by a central stalk rotating inside the F(1) region and a stationary peripheral stalk. During catalysis, ATP synthesis in the catalytic domain of F(1) is coupled via a rotary mechanism of the central stalk subunits to proton translocation. With the subunit c (ATP5MC1), forms the proton-conducting channel in the F(0) domain, that contains two crucial half-channels (inlet and outlet) that facilitate proton movement from the mitochondrial intermembrane space (IMS) into the matrix. Protons are taken up via the inlet half-channel and released through the outlet half-channel, following a Grotthuss mechanism. The sequence is that of ATP synthase F(0) complex subunit a from Rattus norvegicus (Rat).